The following is a 119-amino-acid chain: MAVFLLATSTIMFPTKIEAADCNGACSPFEVPPCRSRDCRCVPIGLFVGFCIHPTGLSSVAKMIDEHPNLCQSDDECMKKGSGNFCARYPNNYIDYGWCFDSDSEALKGFLAMPRATTK.

The signal sequence occupies residues 1-19 (MAVFLLATSTIMFPTKIEA). Disulfide bonds link cysteine 22–cysteine 39, cysteine 26–cysteine 41, and cysteine 34–cysteine 51. Propeptides lie at residues 57-64 (LSSVAKMI) and 117-119 (TTK).

Post-translationally, the C-terminal glycine may be removed from A1b.

Functionally, A1b binds to basic 7S globulin (BG) and stimulates its phosphorylation activity. Involved in the signal transduction system to regulate the growth and differentiation as a hormone peptide. The chain is Albumin-1 from Glycine max (Soybean).